We begin with the raw amino-acid sequence, 845 residues long: Translation initiation factor IF-2 (845 aa).

The interval M1–K260 is disordered. Positions A68–P81 are enriched in pro residues. Positions R101–A140 are enriched in basic and acidic residues. Composition is skewed to low complexity over residues A141 to A166 and T173 to P191. Basic and acidic residues predominate over residues A194 to R215. In terms of domain architecture, tr-type G spans P344–K514. The segment at G353–T360 is G1. G353 to T360 is a GTP binding site. The segment at G378 to H382 is G2. The interval D400–G403 is G3. Residues D400–H404 and N454–D457 contribute to the GTP site. Residues N454 to D457 are G4. The G5 stretch occupies residues S490–L492.

The protein belongs to the TRAFAC class translation factor GTPase superfamily. Classic translation factor GTPase family. IF-2 subfamily.

The protein localises to the cytoplasm. Its function is as follows. One of the essential components for the initiation of protein synthesis. Protects formylmethionyl-tRNA from spontaneous hydrolysis and promotes its binding to the 30S ribosomal subunits. Also involved in the hydrolysis of GTP during the formation of the 70S ribosomal complex. The protein is Translation initiation factor IF-2 of Sphingopyxis alaskensis (strain DSM 13593 / LMG 18877 / RB2256) (Sphingomonas alaskensis).